A 125-amino-acid polypeptide reads, in one-letter code: UPF0738 protein GTNG_0708 (125 aa).

This sequence belongs to the UPF0738 family.

This is UPF0738 protein GTNG_0708 from Geobacillus thermodenitrificans (strain NG80-2).